Reading from the N-terminus, the 163-residue chain is Ribonuclease P protein subunit p25-like protein (163 aa).

Disordered regions lie at residues 1-22 (MEHYRKAGSVELPAPSPMPQLP) and 129-163 (NECGYQPPGAPPGLGSMPSSSCGPRSRRRARDTRS). Low complexity predominate over residues 143–152 (GSMPSSSCGP). The span at 153-163 (RSRRRARDTRS) shows a compositional bias: basic residues.

Belongs to the histone-like Alba family.

It localises to the nucleus. Functionally, may be a component of ribonuclease P or MRP. This Homo sapiens (Human) protein is Ribonuclease P protein subunit p25-like protein (RPP25L).